A 349-amino-acid chain; its full sequence is GTP 3',8-cyclase (349 aa).

The 220-residue stretch at 26-245 folds into the Radical SAM core domain; it reads GFGRAVTYLR…SSFWTLTDIP (220 aa). A GTP-binding site is contributed by Arg-35. [4Fe-4S] cluster-binding residues include Cys-42 and Cys-46. Tyr-48 contributes to the S-adenosyl-L-methionine binding site. Cys-49 is a binding site for [4Fe-4S] cluster. Arg-84 provides a ligand contact to GTP. Gly-88 provides a ligand contact to S-adenosyl-L-methionine. GTP is bound at residue Thr-118. Ser-142 contacts S-adenosyl-L-methionine. A GTP-binding site is contributed by Lys-178. S-adenosyl-L-methionine is bound at residue Met-212. Residues Cys-275 and Cys-278 each contribute to the [4Fe-4S] cluster site. 280–282 serves as a coordination point for GTP; sequence RVR. Position 292 (Cys-292) interacts with [4Fe-4S] cluster.

The protein belongs to the radical SAM superfamily. MoaA family. As to quaternary structure, monomer and homodimer. The cofactor is [4Fe-4S] cluster.

It carries out the reaction GTP + AH2 + S-adenosyl-L-methionine = (8S)-3',8-cyclo-7,8-dihydroguanosine 5'-triphosphate + 5'-deoxyadenosine + L-methionine + A + H(+). It participates in cofactor biosynthesis; molybdopterin biosynthesis. Its function is as follows. Catalyzes the cyclization of GTP to (8S)-3',8-cyclo-7,8-dihydroguanosine 5'-triphosphate. This chain is GTP 3',8-cyclase, found in Caulobacter vibrioides (strain ATCC 19089 / CIP 103742 / CB 15) (Caulobacter crescentus).